A 264-amino-acid chain; its full sequence is Thiazole synthase (264 aa).

Catalysis depends on lysine 106, which acts as the Schiff-base intermediate with DXP. Residues glycine 167, 193–194 (AG), and 215–216 (NS) contribute to the 1-deoxy-D-xylulose 5-phosphate site.

Belongs to the ThiG family. In terms of assembly, homotetramer. Forms heterodimers with either ThiH or ThiS.

The protein localises to the cytoplasm. It carries out the reaction [ThiS sulfur-carrier protein]-C-terminal-Gly-aminoethanethioate + 2-iminoacetate + 1-deoxy-D-xylulose 5-phosphate = [ThiS sulfur-carrier protein]-C-terminal Gly-Gly + 2-[(2R,5Z)-2-carboxy-4-methylthiazol-5(2H)-ylidene]ethyl phosphate + 2 H2O + H(+). It participates in cofactor biosynthesis; thiamine diphosphate biosynthesis. Catalyzes the rearrangement of 1-deoxy-D-xylulose 5-phosphate (DXP) to produce the thiazole phosphate moiety of thiamine. Sulfur is provided by the thiocarboxylate moiety of the carrier protein ThiS. In vitro, sulfur can be provided by H(2)S. In Azotobacter vinelandii (strain DJ / ATCC BAA-1303), this protein is Thiazole synthase.